We begin with the raw amino-acid sequence, 246 residues long: 4-hydroxy-tetrahydrodipicolinate reductase (246 aa).

Residues 7 to 12 (GATGRT), 84 to 86 (GTT), and 108 to 111 (ASNF) contribute to the NAD(+) site. His-140 (proton donor/acceptor) is an active-site residue. His-141 provides a ligand contact to (S)-2,3,4,5-tetrahydrodipicolinate. Lys-144 acts as the Proton donor in catalysis. (S)-2,3,4,5-tetrahydrodipicolinate is bound at residue 150 to 151 (GT).

Belongs to the DapB family.

The protein resides in the cytoplasm. It catalyses the reaction (S)-2,3,4,5-tetrahydrodipicolinate + NAD(+) + H2O = (2S,4S)-4-hydroxy-2,3,4,5-tetrahydrodipicolinate + NADH + H(+). The catalysed reaction is (S)-2,3,4,5-tetrahydrodipicolinate + NADP(+) + H2O = (2S,4S)-4-hydroxy-2,3,4,5-tetrahydrodipicolinate + NADPH + H(+). It functions in the pathway amino-acid biosynthesis; L-lysine biosynthesis via DAP pathway; (S)-tetrahydrodipicolinate from L-aspartate: step 4/4. Its function is as follows. Catalyzes the conversion of 4-hydroxy-tetrahydrodipicolinate (HTPA) to tetrahydrodipicolinate. The sequence is that of 4-hydroxy-tetrahydrodipicolinate reductase from Natronomonas pharaonis (strain ATCC 35678 / DSM 2160 / CIP 103997 / JCM 8858 / NBRC 14720 / NCIMB 2260 / Gabara) (Halobacterium pharaonis).